A 331-amino-acid chain; its full sequence is Autoinducer 2 import system permease protein LsrD (331 aa).

Helical transmembrane passes span 7-27 (YGWELALAALLVLEIGLFGLS), 45-65 (ICIGIVALPLTMVIVSGGIDI), 67-87 (FGSTIGLCSIFLGVMFQAGVP), 90-110 (IAIPLTLLVGALCGLINAGLI), 118-138 (LVITLGTMYLFGGSALLLSGI), 162-182 (LLGLPVPLVIFMVCVLLFWLL), 212-232 (TLCLLYALTGMASAIAAVLLV), 240-260 (SDLGASFLMPAITAVVLGGAN), 261-281 (IYGGSGSILGTALAVLLVGYL), and 288-308 (IGTPNQISSALSGALLILVVV).

It belongs to the binding-protein-dependent transport system permease family. AraH/RbsC subfamily. As to quaternary structure, the complex is composed of two ATP-binding proteins (LsrA), two transmembrane proteins (LsrC and LsrD) and a solute-binding protein (LsrB).

Its subcellular location is the cell inner membrane. Its function is as follows. Part of the ABC transporter complex LsrABCD involved in autoinducer 2 (AI-2) import. Probably responsible for the translocation of the substrate across the membrane. This is Autoinducer 2 import system permease protein LsrD (lsrD) from Yersinia enterocolitica serotype O:8 / biotype 1B (strain NCTC 13174 / 8081).